The following is a 180-amino-acid chain: Stathmin-3 (180 aa).

S-palmitoyl cysteine attachment occurs at residues C22 and C24. One can recognise an SLD domain in the interval 38-180 (GDMEVKQLDK…NKEQREEMSG (143 aa)). Phosphoserine is present on residues S50, S60, S65, S68, S72, S73, and S81. Residues 59–82 (KSPSDLSPESPMLSSPPKKKDTSL) are disordered. Residues 60-74 (SPSDLSPESPMLSSP) show a composition bias toward low complexity. The stretch at 75 to 179 (PKKKDTSLEE…RNKEQREEMS (105 aa)) forms a coiled coil.

This sequence belongs to the stathmin family. Interacts with STAT3. Interacts with CLU (secreted form); this interaction may act as an important modulator during neuronal differentiation. N-terminal palmitoylation promotes specific anchoring to the cytosolic leaflet of Golgi membranes and subsequent vesicular trafficking along dendrites and axons. Neuronal Stathmins are substrates for palmitoyltransferases ZDHHC3, ZDHHC7 and ZDHHC15. As to expression, neuron specific.

Its subcellular location is the golgi apparatus. It is found in the cell projection. The protein resides in the growth cone. The protein localises to the axon. It localises to the cytoplasm. Its subcellular location is the cytosol. Functionally, exhibits microtubule-destabilizing activity, which is antagonized by STAT3. The chain is Stathmin-3 (STMN3) from Homo sapiens (Human).